A 413-amino-acid chain; its full sequence is F-box protein CPR1 (413 aa).

Residues 1–48 (MATIPMDIVNDIFLRLPAKTLVRCRALSKPCYHLINDPDFIESHLHRV) enclose the F-box domain.

In terms of assembly, part of a SCF (ASK-cullin-F-box) protein ligase complex. Interacts with SKP1A/ASK1, SPK1B/ASK2, ASK9, ASK10, ASK11, ASK13, ASK14, ASK16, ASK17, ASK18 and ASK19. Interacts with TRAF1B. As to expression, expressed in seedling, root, stem, leaves, inflorescence and silique, especially in veins and trichomes.

It is found in the cytoplasm. The protein resides in the nucleus. Its pathway is protein modification; protein ubiquitination. In terms of biological role, component of SCF(ASK-cullin-F-box) E3 ubiquitin ligase complexes, which may mediate the ubiquitination and subsequent proteasomal degradation of target proteins. Regulates negatively both salicylic acid (SA)-dependent and SA-independent defense signaling. The protein is F-box protein CPR1 (CPR1) of Arabidopsis thaliana (Mouse-ear cress).